A 123-amino-acid polypeptide reads, in one-letter code: uncharacterized protein (123 aa).

Residues 17-117 enclose the Rhodanese domain; that stretch reads LNNNAFLVDV…NNQDKGWKQN (101 aa).

This is an uncharacterized protein from Rickettsia prowazekii (strain Madrid E).